Here is a 390-residue protein sequence, read N- to C-terminus: Large ribosomal subunit protein uL3y (390 aa).

Positions 1–36 (MSHRKFEHPRHGSLGFLPRKRASRHRGKVKAFPKDD) are disordered. A compositionally biased stretch (basic residues) spans 18 to 31 (PRKRASRHRGKVKA).

The protein belongs to the universal ribosomal protein uL3 family.

It localises to the cytoplasm. The polypeptide is Large ribosomal subunit protein uL3y (ARP2) (Arabidopsis thaliana (Mouse-ear cress)).